The chain runs to 81 residues: Probable antitoxin MazE2 (81 aa).

As to quaternary structure, forms a complex with cognate toxin MazF2.

Functionally, antitoxin component of a type II toxin-antitoxin (TA) system. The sequence is that of Probable antitoxin MazE2 (mazE2) from Mycobacterium tuberculosis (strain ATCC 25618 / H37Rv).